A 91-amino-acid polypeptide reads, in one-letter code: Uteroglobin (91 aa).

Positions 1–21 (MKLTIAIVLVTLTLFCRPAST) are cleaved as a signal peptide.

This sequence belongs to the secretoglobin family. As to quaternary structure, antiparallel homodimer; disulfide-linked. Interaction with LMBR1L is controversial.

The protein localises to the secreted. Functionally, binds phosphatidylcholine, phosphatidylinositol, polychlorinated biphenyls (PCB) and weakly progesterone, potent inhibitor of phospholipase A2. This is Uteroglobin (SCGB1A1) from Bos taurus (Bovine).